The sequence spans 134 residues: Small ribosomal subunit protein uS9 (134 aa).

Residues 114–134 (EVERKKYGLKKARRAPQFSKR) are disordered. Residues 120–134 (YGLKKARRAPQFSKR) are compositionally biased toward basic residues.

Belongs to the universal ribosomal protein uS9 family.

The protein is Small ribosomal subunit protein uS9 of Thermotoga neapolitana (strain ATCC 49049 / DSM 4359 / NBRC 107923 / NS-E).